Consider the following 127-residue polypeptide: Small ribosomal subunit protein uS11 (127 aa).

Belongs to the universal ribosomal protein uS11 family. As to quaternary structure, part of the 30S ribosomal subunit. Interacts with proteins S7 and S18. Binds to IF-3.

Functionally, located on the platform of the 30S subunit, it bridges several disparate RNA helices of the 16S rRNA. Forms part of the Shine-Dalgarno cleft in the 70S ribosome. The chain is Small ribosomal subunit protein uS11 from Rickettsia canadensis (strain McKiel).